We begin with the raw amino-acid sequence, 153 residues long: Zinc finger protein GIS2 (153 aa).

7 consecutive CCHC-type zinc fingers follow at residues 4-21, 23-40, 47-64, 65-82, 92-109, 116-133, and 135-152; these read KACYVCGKIGHLAEDCDS, RLCYNCNKPGHVQTDCTM, KQCYNCGETGHVRSECTV, QRCFNCNQTGHISRECPE, VSCYKCGGPNHMAKDCMK, LKCYTCGQAGHMSRDCQN, and RLCYNCNETGHISKDCPK.

The protein localises to the cytoplasm. May act in the sexual differentiation pathway. The protein is Zinc finger protein GIS2 (GIS2) of Saccharomyces cerevisiae (strain ATCC 204508 / S288c) (Baker's yeast).